The primary structure comprises 306 residues: Protein FAM228A (306 aa).

The interval 237–277 (HASKLSQQNKGAEKKGLALGTRAQRPRSWAAADSPQGTPLV) is disordered. Serine 270 carries the phosphoserine modification.

The protein belongs to the FAM228 family.

The sequence is that of Protein FAM228A (Fam228a) from Rattus norvegicus (Rat).